Reading from the N-terminus, the 677-residue chain is Methionine--tRNA ligase (677 aa).

The 'HIGH' region signature appears at 15–25 (PYANGSIHLGH). Cys146, Cys149, Cys159, and Cys162 together coordinate Zn(2+). The 'KMSKS' region signature appears at 333 to 337 (KMSKS). An ATP-binding site is contributed by Lys336. The region spanning 575 to 677 (DFAKVDLRVA…EGAKPGQQVK (103 aa)) is the tRNA-binding domain.

Belongs to the class-I aminoacyl-tRNA synthetase family. MetG type 1 subfamily. As to quaternary structure, homodimer. It depends on Zn(2+) as a cofactor.

Its subcellular location is the cytoplasm. It carries out the reaction tRNA(Met) + L-methionine + ATP = L-methionyl-tRNA(Met) + AMP + diphosphate. Its function is as follows. Is required not only for elongation of protein synthesis but also for the initiation of all mRNA translation through initiator tRNA(fMet) aminoacylation. In Enterobacter sp. (strain 638), this protein is Methionine--tRNA ligase.